A 276-amino-acid polypeptide reads, in one-letter code: N-acyl homoserine lactonase AiiB (276 aa).

6 residues coordinate Zn(2+): His-111, His-113, His-116, His-191, Asp-213, and His-259.

It belongs to the metallo-beta-lactamase superfamily. Requires Zn(2+) as cofactor.

It catalyses the reaction an N-acyl-L-homoserine lactone + H2O = an N-acyl-L-homoserine + H(+). This chain is N-acyl homoserine lactonase AiiB, found in Agrobacterium fabrum (strain C58 / ATCC 33970) (Agrobacterium tumefaciens (strain C58)).